The following is a 392-amino-acid chain: Iripin-4 (392 aa).

The signal sequence occupies residues 1-16 (MRSLATFMSLLTICWG). 3 N-linked (GlcNAc...) asparagine glycosylation sites follow: asparagine 104, asparagine 130, and asparagine 265.

The protein belongs to the serpin family. As to expression, female salivary gland.

It is found in the secreted. Functionally, serpin with unknown function. Weakly inhibits human granzyme B (GZMB). Acts as a substrate for porcine elastase. This chain is Iripin-4, found in Ixodes ricinus (Common tick).